The following is a 345-amino-acid chain: MSQRIFLPDTLANWQWPRHLNPHYAEVKKASAAWAKSFRAFQTKAQEAFDRCDFNLLASFAYPLADEARLRSGCDLMNLFFVIDEYSDVATEEEVRAQKDIVMDAIRNTEKPRPAGEWIGGEVSRQFWDLAKKTASTQAQKRFIDTFDEYLESVVQQAADRNNSHVRGIESYLEVRRNTIGAKPSFALLEFDMQLPDEVINHPVIKELENSCIDMLCLGNDVVSYNLEQARDDDGHNIVTIAMNELRTDVAGAMIWVDEYHKQLESRFMENFKKVPRWGGPIDLQVARYCDGLGNWVRANDQWSFESERYFGKKGPEIIQRRWITLMPKMVSEELGPQIVDGSHL.

Residues aspartate 84, asparagine 220, serine 224, and glutamate 228 each contribute to the Mg(2+) site. The short motif at 84–88 (DEYSD) is the DDXXD motif element. 2 residues coordinate (2E,6E)-farnesyl diphosphate: arginine 309 and tyrosine 310.

The protein belongs to the terpene synthase family. Monomer. It depends on Mg(2+) as a cofactor.

The enzyme catalyses (2E,6E)-farnesyl diphosphate = Delta(6)-protoilludene + diphosphate. It functions in the pathway secondary metabolite biosynthesis. In terms of biological role, delta(6)-protoilludene synthase, part of the gene cluster that mediates the biosynthesis of melleolides, a range of antifungal and phytotoxic polyketide derivatives composed of an orsellinic acid (OA) moiety esterified to various sesquiterpene alcohols. The first step in melleolides biosynthesis is performed by the delta(6)-protoilludene synthase PRO1 which catalyzes the cyclization of farnesyl diphosphate to protoilludene. The orsellinic acid synthase armB produces OA by condensing acetyl-CoA with 3 malonyl-CoA units in a three-round chain elongation reaction folowed by a C2-C7 ring closure. ArmB further catalyzes the trans-esterification of OA to the various sesquiterpene alcohols resulting from the hydroxylation of protoilludene. The melleolides cluster also includes 5 cytochrome P450 monooxygenases, 4 NAD(+)-dependent oxidoreductases, one flavin-dependent oxidoreductase, and one O-methyltransferase. The cytochrome P450 monooxygenases may be involved in protoilludene hydroxylation to elaborate melleolides with multiple alcohol groups, such as melleolide D, which carries alcohol functionalities at C-4, C-5, C-10, and C-13. The role of the NAD(+)-dependent enzymes remains unknown. Numerous melleolides, including arnamial, show 5'-O-methylation of the aromatic moiety which may be catalyzed by the methyltransferase encoded in the cluster. The flavin-dependent oxidoreductase might represent the dehydrogenase yielding the aldehyde in position 1 of arnamial and other melleolides. Finally, several halogenases, localized outside of the cluster, are able to catalyze the transfer of a single chlorine atom to the melleolide backbone, resulting in a 6'-chloromelleolide product. The chain is Delta(6)-protoilludene synthase from Armillaria gallica (Bulbous honey fungus).